The sequence spans 291 residues: Pantothenate synthetase 1 (291 aa).

His37 serves as the catalytic Proton donor. 147–150 is a binding site for ATP; sequence GEKD. Gln153 serves as a coordination point for (R)-pantoate. 184 to 187 serves as a coordination point for ATP; that stretch reads ISSR.

This sequence belongs to the pantothenate synthetase family. Homodimer.

It is found in the cytoplasm. The catalysed reaction is (R)-pantoate + beta-alanine + ATP = (R)-pantothenate + AMP + diphosphate + H(+). It functions in the pathway cofactor biosynthesis; (R)-pantothenate biosynthesis; (R)-pantothenate from (R)-pantoate and beta-alanine: step 1/1. Its function is as follows. Catalyzes the condensation of pantoate with beta-alanine in an ATP-dependent reaction via a pantoyl-adenylate intermediate. In Frankia alni (strain DSM 45986 / CECT 9034 / ACN14a), this protein is Pantothenate synthetase 1.